The chain runs to 294 residues: Nucleotide-binding protein Maqu_2718 (294 aa).

8–15 (GRSGSGKS) serves as a coordination point for ATP. 61–64 (DARN) contributes to the GTP binding site.

Belongs to the RapZ-like family.

Displays ATPase and GTPase activities. This chain is Nucleotide-binding protein Maqu_2718, found in Marinobacter nauticus (strain ATCC 700491 / DSM 11845 / VT8) (Marinobacter aquaeolei).